A 257-amino-acid polypeptide reads, in one-letter code: Enterotoxin type A (257 aa).

The N-terminal stretch at 1–24 is a signal peptide; that stretch reads MKKTAFTLLLFIALTLTTSPLVNG. A disulfide bridge connects residues Cys120 and Cys130. Positions 211, 249, and 251 each coordinate Zn(2+).

The protein belongs to the staphylococcal/streptococcal toxin family. As to quaternary structure, monomer. Interacts with MHC class II molecules alpha/HLA-DRB1 and beta/HLA-DRA chains. The interaction with MHC-II molecules occurs at both zinc-dependent and zinc-independent sites. Interacts with T-cell receptor beta variable 7-9/TRBV7-9. The cofactor is Zn(2+).

It localises to the secreted. In terms of biological role, staphylococcal enterotoxin that activates the host immune system by binding as unprocessed molecules to major histocompatibility (MHC) complex class II and T-cell receptor (TCR) molecules. In turn, waves of cellular activation, cytokine production, and migration into the lung tissue and airways occur via alphabeta T-cells. Also causes the intoxication staphylococcal food poisoning syndrome. The illness is characterized by high fever, hypotension, diarrhea, shock, and in some cases death. In Staphylococcus aureus, this protein is Enterotoxin type A (entA).